Reading from the N-terminus, the 596-residue chain is Elongation factor 4 (596 aa).

In terms of domain architecture, tr-type G spans 2–184 (KHIRNFSIIA…VIVAQIPSPE (183 aa)). Residues 14–19 (DHGKST) and 131–134 (NKID) each bind GTP.

The protein belongs to the TRAFAC class translation factor GTPase superfamily. Classic translation factor GTPase family. LepA subfamily.

Its subcellular location is the cell inner membrane. The catalysed reaction is GTP + H2O = GDP + phosphate + H(+). Required for accurate and efficient protein synthesis under certain stress conditions. May act as a fidelity factor of the translation reaction, by catalyzing a one-codon backward translocation of tRNAs on improperly translocated ribosomes. Back-translocation proceeds from a post-translocation (POST) complex to a pre-translocation (PRE) complex, thus giving elongation factor G a second chance to translocate the tRNAs correctly. Binds to ribosomes in a GTP-dependent manner. The chain is Elongation factor 4 from Shewanella sediminis (strain HAW-EB3).